Reading from the N-terminus, the 206-residue chain is Ras-related protein Rab-7b (206 aa).

Residue 15–22 coordinates GTP; it reads GDSGVGKT. A phosphoserine mark is found at Ser17 and Ser23. A phosphothreonine mark is found at Thr34, Thr40, and Thr64. GTP contacts are provided by residues 34 to 40 and 63 to 67; these read TQQYRAT and DTAGQ. Positions 37-45 match the Effector region motif; that stretch reads YRATVGADF. Ser72 is subject to Phosphoserine. Tyr78 and Tyr88 each carry phosphotyrosine. GTP-binding positions include 125 to 128 and 157 to 158; these read NKLD and AK. 2 S-geranylgeranyl cysteine lipidation sites follow: Cys205 and Cys206.

The protein belongs to the small GTPase superfamily. Rab family. Glycosylated.

It localises to the cytoplasm. The protein resides in the cytoskeleton. The protein is Ras-related protein Rab-7b of Paramecium octaurelia.